The chain runs to 171 residues: S-ribosylhomocysteine lyase (171 aa).

Positions 54, 58, and 128 each coordinate Fe cation.

This sequence belongs to the LuxS family. In terms of assembly, homodimer. Fe cation is required as a cofactor.

It carries out the reaction S-(5-deoxy-D-ribos-5-yl)-L-homocysteine = (S)-4,5-dihydroxypentane-2,3-dione + L-homocysteine. Functionally, involved in the synthesis of autoinducer 2 (AI-2) which is secreted by bacteria and is used to communicate both the cell density and the metabolic potential of the environment. The regulation of gene expression in response to changes in cell density is called quorum sensing. Catalyzes the transformation of S-ribosylhomocysteine (RHC) to homocysteine (HC) and 4,5-dihydroxy-2,3-pentadione (DPD). This is S-ribosylhomocysteine lyase from Shigella boydii serotype 4 (strain Sb227).